We begin with the raw amino-acid sequence, 338 residues long: Ketol-acid reductoisomerase (NADP(+)) (338 aa).

Residues 1-181 (MKVYYDKDCN…GGGRSGIIET (181 aa)) enclose the KARI N-terminal Rossmann domain. Residues 24–27 (YGSQ), Arg47, Ser50, Ser52, and 82–85 (DETQ) contribute to the NADP(+) site. His107 is an active-site residue. Residue Gly133 participates in NADP(+) binding. The KARI C-terminal knotted domain maps to 182-327 (NFREETETDL…ARLRAMMPWI (146 aa)). Positions 190, 194, 226, and 230 each coordinate Mg(2+). A substrate-binding site is contributed by Ser251.

It belongs to the ketol-acid reductoisomerase family. Mg(2+) serves as cofactor.

It catalyses the reaction (2R)-2,3-dihydroxy-3-methylbutanoate + NADP(+) = (2S)-2-acetolactate + NADPH + H(+). The enzyme catalyses (2R,3R)-2,3-dihydroxy-3-methylpentanoate + NADP(+) = (S)-2-ethyl-2-hydroxy-3-oxobutanoate + NADPH + H(+). It participates in amino-acid biosynthesis; L-isoleucine biosynthesis; L-isoleucine from 2-oxobutanoate: step 2/4. It functions in the pathway amino-acid biosynthesis; L-valine biosynthesis; L-valine from pyruvate: step 2/4. Involved in the biosynthesis of branched-chain amino acids (BCAA). Catalyzes an alkyl-migration followed by a ketol-acid reduction of (S)-2-acetolactate (S2AL) to yield (R)-2,3-dihydroxy-isovalerate. In the isomerase reaction, S2AL is rearranged via a Mg-dependent methyl migration to produce 3-hydroxy-3-methyl-2-ketobutyrate (HMKB). In the reductase reaction, this 2-ketoacid undergoes a metal-dependent reduction by NADPH to yield (R)-2,3-dihydroxy-isovalerate. This is Ketol-acid reductoisomerase (NADP(+)) from Pelobacter propionicus (strain DSM 2379 / NBRC 103807 / OttBd1).